A 388-amino-acid chain; its full sequence is Succinate--CoA ligase [ADP-forming] subunit beta (388 aa).

In terms of domain architecture, ATP-grasp spans K9–Q244. Residues K46, G53–G55, E99, T102, and E107 contribute to the ATP site. N199 and D213 together coordinate Mg(2+). Substrate contacts are provided by residues N264 and G321–V323.

The protein belongs to the succinate/malate CoA ligase beta subunit family. As to quaternary structure, heterotetramer of two alpha and two beta subunits. The cofactor is Mg(2+).

It carries out the reaction succinate + ATP + CoA = succinyl-CoA + ADP + phosphate. The enzyme catalyses GTP + succinate + CoA = succinyl-CoA + GDP + phosphate. It functions in the pathway carbohydrate metabolism; tricarboxylic acid cycle; succinate from succinyl-CoA (ligase route): step 1/1. In terms of biological role, succinyl-CoA synthetase functions in the citric acid cycle (TCA), coupling the hydrolysis of succinyl-CoA to the synthesis of either ATP or GTP and thus represents the only step of substrate-level phosphorylation in the TCA. The beta subunit provides nucleotide specificity of the enzyme and binds the substrate succinate, while the binding sites for coenzyme A and phosphate are found in the alpha subunit. The sequence is that of Succinate--CoA ligase [ADP-forming] subunit beta from Escherichia coli O139:H28 (strain E24377A / ETEC).